Consider the following 100-residue polypeptide: Small ribosomal subunit protein uS14 (100 aa).

Belongs to the universal ribosomal protein uS14 family. Part of the 30S ribosomal subunit. Contacts proteins S3 and S10.

Binds 16S rRNA, required for the assembly of 30S particles and may also be responsible for determining the conformation of the 16S rRNA at the A site. In Trichodesmium erythraeum (strain IMS101), this protein is Small ribosomal subunit protein uS14.